The following is a 756-amino-acid chain: Centromere protein I (756 aa).

Residues 1-60 (MSPQKRVKNVQAQNRTSQGSSSFQTTLSAWKVKQDPSNSKNISKHGQNNPVGDYEHADDQ) form a disordered region. Polar residues-rich tracts occupy residues 10 to 28 (VQAQ…TTLS) and 35 to 50 (DPSN…QNNP).

The protein belongs to the CENP-I/CTF3 family. Component of the CENPA-CAD complex, composed of CENPI, CENPK, CENPL, CENPO, CENPP, CENPQ, CENPR and CENPS. The CENPA-CAD complex interacts with the CENPA-NAC complex, at least composed of CENPA, CENPC, CENPH, CENPM, CENPN, CENPT and CENPU. Interacts with SENP6. In terms of processing, sumoylated. Sumoylated form can be polyubiquitinated by RNF4, leading to its degradation. Desumoylation by SENP6 prevents its degradation.

The protein localises to the nucleus. Its subcellular location is the chromosome. It localises to the centromere. Functionally, component of the CENPA-CAD (nucleosome distal) complex, a complex recruited to centromeres which is involved in assembly of kinetochore proteins, mitotic progression and chromosome segregation. May be involved in incorporation of newly synthesized CENPA into centromeres via its interaction with the CENPA-NAC complex. Required for the localization of CENPF, MAD1L1 and MAD2 (MAD2L1 or MAD2L2) to kinetochores. Involved in the response of gonadal tissues to follicle-stimulating hormone. The protein is Centromere protein I (CENPI) of Homo sapiens (Human).